The chain runs to 360 residues: Capsular polysaccharide phosphotransferase LcbA (360 aa).

The protein belongs to the stealth family.

Functionally, part of a group II capsule biosynthesis locus. The chain is Capsular polysaccharide phosphotransferase LcbA (lcbA) from Aeromonas hydrophila.